The following is a 158-amino-acid chain: Ethylene-responsive transcription factor ERF120 (158 aa).

Positions 86 to 147 (KHKGVRKKPS…SARRGTKNGE (62 aa)) form a DNA-binding region, AP2/ERF. Residues 134–158 (VGRRSARRGTKNGEEASTKKTTEKN) are disordered. Positions 144–158 (KNGEEASTKKTTEKN) are enriched in basic and acidic residues.

The protein belongs to the AP2/ERF transcription factor family. ERF subfamily.

Its subcellular location is the nucleus. Functionally, probably acts as a transcriptional activator. Binds to the GCC-box pathogenesis-related promoter element. May be involved in the regulation of gene expression by stress factors and by components of stress signal transduction pathways. In Arabidopsis thaliana (Mouse-ear cress), this protein is Ethylene-responsive transcription factor ERF120 (ERF120).